The chain runs to 130 residues: MRHYEIVFMVHPDQSEQVPGMIERYTATITGAQGTIHRLEDWGRRQLAYPINKLHKAHYVLLNVEAPQEAIDELETNFRFNDAVIRSMVMRVKHAVTEASPMVKAKDERRERREDFAEAGDDVDAGDSEE.

Residues 100 to 130 (SPMVKAKDERRERREDFAEAGDDVDAGDSEE) are disordered. Residues 104–116 (KAKDERRERREDF) are compositionally biased toward basic and acidic residues. The span at 117–130 (AEAGDDVDAGDSEE) shows a compositional bias: acidic residues.

Belongs to the bacterial ribosomal protein bS6 family.

Binds together with bS18 to 16S ribosomal RNA. This is Small ribosomal subunit protein bS6 from Pectobacterium carotovorum subsp. carotovorum (strain PC1).